A 457-amino-acid chain; its full sequence is Trigger factor (457 aa).

Residues 162–243 (GDFVSIDLSA…VQTVKERELP (82 aa)) enclose the PPIase FKBP-type domain. Residues 434-457 (AELFGSSEDETEADASDSAESEDK) form a disordered region. Residues 440 to 457 (SEDETEADASDSAESEDK) show a composition bias toward acidic residues.

Belongs to the FKBP-type PPIase family. Tig subfamily.

The protein localises to the cytoplasm. It carries out the reaction [protein]-peptidylproline (omega=180) = [protein]-peptidylproline (omega=0). Its function is as follows. Involved in protein export. Acts as a chaperone by maintaining the newly synthesized protein in an open conformation. Functions as a peptidyl-prolyl cis-trans isomerase. In Rhodococcus erythropolis (strain PR4 / NBRC 100887), this protein is Trigger factor.